Consider the following 295-residue polypeptide: Small ribosomal subunit protein uS2 (295 aa).

A disordered region spans residues 264–295 (KFSKTKNIDEETNTEFEQALNDTDENKNADNA).

Belongs to the universal ribosomal protein uS2 family.

The polypeptide is Small ribosomal subunit protein uS2 (Rickettsia akari (strain Hartford)).